Here is a 127-residue protein sequence, read N- to C-terminus: Group 3 truncated hemoglobin ctb (127 aa).

Tyrosine 64 and histidine 72 together coordinate heme.

It belongs to the truncated hemoglobin family. Group III subfamily. Monomer. Heme is required as a cofactor.

The protein localises to the cytoplasm. Has been suggested to be involved in cytochrome c peroxidase or P450-like oxygen chemistry or cyanide detoxification. The high oxygen affinity of this protein suggests that it probably does not function as an oxygen transporter. The protein is Group 3 truncated hemoglobin ctb (ctb) of Campylobacter jejuni subsp. jejuni serotype O:2 (strain ATCC 700819 / NCTC 11168).